A 348-amino-acid chain; its full sequence is Rhodopsin (348 aa).

Methionine 1 is modified (N-acetylmethionine). Over 1 to 36 (MNGTEGPNFYVPFSNKTGVVRSPFEAPQYYLAEPWQ) the chain is Extracellular. Residues asparagine 2 and asparagine 15 are each glycosylated (N-linked (GlcNAc...) asparagine). Residues 37–61 (FSMLAAYMFLLIVLGFPINFLTLYV) traverse the membrane as a helical segment. Residues 62 to 73 (TVQHKKLRTPLN) are Cytoplasmic-facing. Residues 74 to 96 (YILLNLAVADLFMVFGGFTTTLY) traverse the membrane as a helical segment. At 97–110 (TSLHGYFVFGPTGC) the chain is on the extracellular side. Cysteines 110 and 187 form a disulfide. Residues 111–133 (NLEGFFATLGGEIALWSLVVLAI) form a helical membrane-spanning segment. A 'Ionic lock' involved in activated form stabilization motif is present at residues 134-136 (ERY). Residues 134–152 (ERYVVVCKPMSNFRFGENH) are Cytoplasmic-facing. Residues 153-173 (AIMGVAFTWVMALACAAPPLV) traverse the membrane as a helical segment. Topologically, residues 174 to 202 (GWSRYIPQGMQCSCGALYFTLKPEINNES) are extracellular. Residue glutamate 201 participates in Zn(2+) binding. A helical membrane pass occupies residues 203 to 224 (FVIYMFVVHFSIPLIVIFFCYG). Over 225–252 (QLVFTVKEAAAQQQESATTQKAEKEVTR) the chain is Cytoplasmic. The chain crosses the membrane as a helical span at residues 253 to 274 (MVIIMVIAFLICWLPYAGVAFY). Residues 275 to 286 (IFTHQGSDFGPI) are Extracellular-facing. Glutamine 279 contacts Zn(2+). The chain crosses the membrane as a helical span at residues 287 to 308 (FMTIPAFFAKSSSVYNPVIYIM). Position 296 is an N6-(retinylidene)lysine (lysine 296). Over 309–348 (MNKQFRNCMLTTLCCGKNPLGDDEASTTVSKTETSQVAPA) the chain is Cytoplasmic. Residues cysteine 322 and cysteine 323 are each lipidated (S-palmitoyl cysteine). An interaction with SAG region spans residues 330–348 (DDEASTTVSKTETSQVAPA). Phosphoserine is present on serine 334. The residue at position 334 (serine 334) is a Phosphoserine; by RK and GRK7. 2 positions are modified to phosphothreonine: threonine 335 and threonine 336. 2 positions are modified to phosphothreonine; by RK and GRK7: threonine 335 and threonine 336. Serine 338 is subject to Phosphoserine; by RK and GRK7. A phosphothreonine mark is found at threonine 340 and threonine 342. The residue at position 343 (serine 343) is a Phosphoserine; by RK and GRK7.

The protein belongs to the G-protein coupled receptor 1 family. Opsin subfamily. As to quaternary structure, homodimer. May form a complex composed of RHO, GRK1 and RCVRN in a Ca(2+)-dependent manner; RCVRN prevents the interaction between GRK1 and RHO. Interacts with GRK1. Interacts (phosphorylated form) with SAG. Interacts with GNAT1. Interacts with GNAT3. SAG and G-proteins compete for a common binding site. Interacts with PRCD; the interaction promotes PRCD stability. Forms a complex with ASAP1 and ARF4. Forms a complex with ASAP1, RAB11A, Rabin8/RAB3IP, ARF4 and RAB11FIP3; the complex regulates Golgi-to-cilia rhodopsin/RHO transport in photoreceptors. Post-translationally, phosphorylated on some or all of the serine and threonine residues present in the C-terminal region. In terms of processing, contains one covalently linked retinal chromophore. Upon light absorption, the covalently bound 11-cis-retinal is converted to all-trans-retinal. After hydrolysis of the Schiff base and release of the covalently bound all-trans-retinal, active rhodopsin is regenerated by binding of a fresh molecule of 11-cis-retinal.

It localises to the membrane. The protein localises to the cell projection. It is found in the cilium. Its subcellular location is the photoreceptor outer segment. In terms of biological role, photoreceptor required for image-forming vision at low light intensity. Required for photoreceptor cell viability after birth. Light-induced isomerization of 11-cis to all-trans retinal triggers a conformational change that activates signaling via G-proteins. Subsequent receptor phosphorylation mediates displacement of the bound G-protein alpha subunit by the arrestin SAG and terminates signaling. This Ovis aries (Sheep) protein is Rhodopsin (RHO).